A 113-amino-acid polypeptide reads, in one-letter code: Small ribosomal subunit protein bS6 (113 aa).

It belongs to the bacterial ribosomal protein bS6 family.

Binds together with bS18 to 16S ribosomal RNA. The sequence is that of Small ribosomal subunit protein bS6 (rpsF) from Synechocystis sp. (strain ATCC 27184 / PCC 6803 / Kazusa).